The chain runs to 447 residues: Signal recognition particle 54 kDa protein (447 aa).

GTP contacts are provided by residues 103–110, 185–189, and 245–248; these read GVQGSGKT, DTAGR, and TKMD.

This sequence belongs to the GTP-binding SRP family. SRP54 subfamily. In terms of assembly, part of the signal recognition particle protein translocation system, which is composed of SRP and FtsY. Archaeal SRP consists of a 7S RNA molecule of 300 nucleotides and two protein subunits: SRP54 and SRP19.

The protein localises to the cytoplasm. The catalysed reaction is GTP + H2O = GDP + phosphate + H(+). In terms of biological role, involved in targeting and insertion of nascent membrane proteins into the cytoplasmic membrane. Binds to the hydrophobic signal sequence of the ribosome-nascent chain (RNC) as it emerges from the ribosomes. The SRP-RNC complex is then targeted to the cytoplasmic membrane where it interacts with the SRP receptor FtsY. This chain is Signal recognition particle 54 kDa protein, found in Saccharolobus islandicus (strain Y.N.15.51 / Yellowstone #2) (Sulfolobus islandicus).